The chain runs to 420 residues: Innexin-3 (420 aa).

Transmembrane regions (helical) follow at residues 33 to 53 (ATLL…GSAI), 104 to 124 (WVPI…WIWS), 193 to 213 (MLYI…FIIL), and 278 to 298 (IYLF…INTL). The segment at 378-405 (NRDFHHGHSTKSTSPGLEEGHHEHLYTP) is disordered. Basic and acidic residues predominate over residues 395 to 405 (EEGHHEHLYTP).

The protein belongs to the pannexin family. Interacts with F-actin. In terms of tissue distribution, evenly distributed along the adjoining membranes of the two pm5 pharyngeal muscle cells.

It localises to the cell membrane. Its subcellular location is the cell junction. The protein localises to the gap junction. Its function is as follows. Structural component of gap junctions. Plays a role in maintaining gap junction activity to promote phayngeal muscle contraction. In Caenorhabditis elegans, this protein is Innexin-3.